The primary structure comprises 236 residues: Leucyl/phenylalanyl-tRNA--protein transferase (236 aa).

It belongs to the L/F-transferase family.

Its subcellular location is the cytoplasm. It carries out the reaction N-terminal L-lysyl-[protein] + L-leucyl-tRNA(Leu) = N-terminal L-leucyl-L-lysyl-[protein] + tRNA(Leu) + H(+). The enzyme catalyses N-terminal L-arginyl-[protein] + L-leucyl-tRNA(Leu) = N-terminal L-leucyl-L-arginyl-[protein] + tRNA(Leu) + H(+). The catalysed reaction is L-phenylalanyl-tRNA(Phe) + an N-terminal L-alpha-aminoacyl-[protein] = an N-terminal L-phenylalanyl-L-alpha-aminoacyl-[protein] + tRNA(Phe). Functionally, functions in the N-end rule pathway of protein degradation where it conjugates Leu, Phe and, less efficiently, Met from aminoacyl-tRNAs to the N-termini of proteins containing an N-terminal arginine or lysine. The protein is Leucyl/phenylalanyl-tRNA--protein transferase of Shewanella sp. (strain MR-4).